The following is a 66-amino-acid chain: Protein translocase subunit SecE (66 aa).

A helical membrane pass occupies residues Leu41–Leu61.

It belongs to the SecE/SEC61-gamma family. Component of the Sec protein translocase complex. Heterotrimer consisting of SecY (alpha), SecG (beta) and SecE (gamma) subunits. The heterotrimers can form oligomers, although 1 heterotrimer is thought to be able to translocate proteins. Interacts with the ribosome. May interact with SecDF, and other proteins may be involved.

It is found in the cell membrane. Functionally, essential subunit of the Sec protein translocation channel SecYEG. Clamps together the 2 halves of SecY. May contact the channel plug during translocation. The protein is Protein translocase subunit SecE of Archaeoglobus fulgidus (strain ATCC 49558 / DSM 4304 / JCM 9628 / NBRC 100126 / VC-16).